The chain runs to 285 residues: 4-diphosphocytidyl-2-C-methyl-D-erythritol kinase (285 aa).

Residue lysine 10 is part of the active site. Residue proline 93–serine 103 coordinates ATP. Residue aspartate 135 is part of the active site.

It belongs to the GHMP kinase family. IspE subfamily.

The catalysed reaction is 4-CDP-2-C-methyl-D-erythritol + ATP = 4-CDP-2-C-methyl-D-erythritol 2-phosphate + ADP + H(+). It participates in isoprenoid biosynthesis; isopentenyl diphosphate biosynthesis via DXP pathway; isopentenyl diphosphate from 1-deoxy-D-xylulose 5-phosphate: step 3/6. In terms of biological role, catalyzes the phosphorylation of the position 2 hydroxy group of 4-diphosphocytidyl-2C-methyl-D-erythritol. The protein is 4-diphosphocytidyl-2-C-methyl-D-erythritol kinase of Ruthia magnifica subsp. Calyptogena magnifica.